The sequence spans 139 residues: Nuclear receptor 2C2-associated protein (139 aa).

The protein belongs to the NR2C2AP family. As to quaternary structure, interacts with NR2C2/TR4. Expressed in all tissues examined, with highest expression in heart, skeletal muscle and pancreas.

The protein localises to the nucleus. In terms of biological role, may act as a repressor of NR2C2-mediated transactivation by suppressing the binding between NR2C2/TR4 and the TR4-response element in target genes. This Homo sapiens (Human) protein is Nuclear receptor 2C2-associated protein (NR2C2AP).